We begin with the raw amino-acid sequence, 155 residues long: Ribosomal RNA large subunit methyltransferase H (155 aa).

Residues leucine 73, glycine 104, and 123-128 contribute to the S-adenosyl-L-methionine site; that span reads LSALTL.

It belongs to the RNA methyltransferase RlmH family. Homodimer.

The protein localises to the cytoplasm. The enzyme catalyses pseudouridine(1915) in 23S rRNA + S-adenosyl-L-methionine = N(3)-methylpseudouridine(1915) in 23S rRNA + S-adenosyl-L-homocysteine + H(+). Functionally, specifically methylates the pseudouridine at position 1915 (m3Psi1915) in 23S rRNA. The protein is Ribosomal RNA large subunit methyltransferase H of Saccharophagus degradans (strain 2-40 / ATCC 43961 / DSM 17024).